The chain runs to 375 residues: MTSVKLAEKNFEQDKEFAKAMHGDSYKKRGISALMAKAKEASDVATNGYFKHWDGGVSEDDEKKRLDDYSSLTKNYYNLVTDFYEYGWGSSFHFSRYYKGEAFRQATARHEHFLAHKMNINENMRVLDVGCGVGGPGREICRFTDCTIVGLNNNDYQVERAQYYAKKYKLDDKLSYVKGDFMQMDFEPESFDAVYAIEATVHAPVLEGVYSEIYKVLKPGGVFGVYEWVMTDKYDENNEEHRKIAYGIEVGDGIPKMYKREVAEQALKNVGFDIEYEKDLADVNDEIPWYYPLAGEWKYVQTLSDCFTIFRTSKIGRTVTTNVVGLMEKIGLAPKGSKQVTGALEDAAVNLVAGGEQKLFTPMMLYIARKPLDAK.

It belongs to the class I-like SAM-binding methyltransferase superfamily. Erg6/SMT family.

The enzyme catalyses zymosterol + S-adenosyl-L-methionine = fecosterol + S-adenosyl-L-homocysteine + H(+). Its pathway is steroid metabolism; ergosterol biosynthesis; ergosterol from zymosterol: step 1/5. Functionally, catalyzes the methyl transfer from S-adenosyl-methionine to the C-24 of zymosterol to form fecosterol. The sequence is that of Sterol 24-C-methyltransferase (ERG6) from Clavispora lusitaniae (strain ATCC 42720) (Yeast).